The primary structure comprises 461 residues: Aldehyde dehydrogenase LUC3 (461 aa).

Residue 215 to 220 participates in NAD(+) binding; sequence GSTATG. Active-site residues include E237 and C271.

This sequence belongs to the aldehyde dehydrogenase family.

It carries out the reaction an aldehyde + NAD(+) + H2O = a carboxylate + NADH + 2 H(+). Its pathway is mycotoxin biosynthesis. In terms of biological role, aldehyde dehydrogenase; part of the gene cluster that mediates the biosynthesis of the mycotoxin lucilactaene and the lucilactaene-related compound NG-391 that act as cell cycle inhibitors with potent growth inhibitory activity against malarial parasites, moderate growth inhibitory activity against cancer cells, and no activity against bacteria and fungi. LUC3 is important for lucilactaene biosynthesis and performs the oxidation of the C-20 alcoholic analog prelucilactaene G into a carboxylic derivative that has still to be identified. The pathway begins with the hybrid PKS-NRPS synthetase LUC5 which is responsible for the condensation of one acetyl-coenzyme A (CoA) unit with six malonyl-CoA units and the amide linkage of the arising heptaketide and homoserine, subsequently releasing the first intermediate prelucilactaene B. Both the cytochrome P450 monooxygenase LUC2 and the hydrolase LUC6 function in parallel in modification of prelucilactaene B. LUC6 may catalyze the 2-pyrrolidone ring formation to form prelucilactaene C from prelucilactaene B, followed by C-15 hydroxylation by the same enzyme to give prelucilactaene D, which is then converted to prelucilactaene E by epoxidation, and finally to prelucilactaene F by cyclization. Prelucilactane D, prelucilactaene E, and prelucilactaene F can be converted to dihydrolucilactaene, NG391, and lucilactaene, respectively, via C-20 methyl group hydroxylation by the cytochrome P450 monooxygenase LUC2. However, LUC2, unlike FUS8 in fusarin C biosynthesis, is not enough for the full oxidation of the C-20 methyl group into carboxylic acid, which is a prerequisite for the final methylation step. The aldehyde dehydrogenase LUC3 is involved in the biosynthesis by further oxidation of the C-20 alcoholic analog prelucilactaene G into a carboxylic derivative. This unidentified carboxylic derivative may be converted to demethyllucilactaene. As the last step, the methyltransferase LUC1 methylates the hydroxyl group at C-21 of demethyllucilactaene to generate lucilactaene. The polypeptide is Aldehyde dehydrogenase LUC3 (Fusarium sp).